The sequence spans 428 residues: Serine--tRNA ligase (428 aa).

237–239 (TAE) lines the L-serine pocket. 268 to 270 (RSE) is a binding site for ATP. Glu-291 provides a ligand contact to L-serine. 355 to 358 (EISS) serves as a coordination point for ATP. Ser-390 provides a ligand contact to L-serine.

It belongs to the class-II aminoacyl-tRNA synthetase family. Type-1 seryl-tRNA synthetase subfamily. In terms of assembly, homodimer. The tRNA molecule binds across the dimer.

It is found in the cytoplasm. The enzyme catalyses tRNA(Ser) + L-serine + ATP = L-seryl-tRNA(Ser) + AMP + diphosphate + H(+). The catalysed reaction is tRNA(Sec) + L-serine + ATP = L-seryl-tRNA(Sec) + AMP + diphosphate + H(+). Its pathway is aminoacyl-tRNA biosynthesis; selenocysteinyl-tRNA(Sec) biosynthesis; L-seryl-tRNA(Sec) from L-serine and tRNA(Sec): step 1/1. Its function is as follows. Catalyzes the attachment of serine to tRNA(Ser). Is also able to aminoacylate tRNA(Sec) with serine, to form the misacylated tRNA L-seryl-tRNA(Sec), which will be further converted into selenocysteinyl-tRNA(Sec). The sequence is that of Serine--tRNA ligase from Hydrogenovibrio crunogenus (strain DSM 25203 / XCL-2) (Thiomicrospira crunogena).